The chain runs to 357 residues: Meiotically up-regulated gene 135 protein (357 aa).

This sequence belongs to the UPF0612 family.

It localises to the nucleus. Its function is as follows. Has a role in meiosis. The polypeptide is Meiotically up-regulated gene 135 protein (mug135) (Schizosaccharomyces pombe (strain 972 / ATCC 24843) (Fission yeast)).